Reading from the N-terminus, the 197-residue chain is Large ribosomal subunit protein bL25 (197 aa).

It belongs to the bacterial ribosomal protein bL25 family. CTC subfamily. Part of the 50S ribosomal subunit; part of the 5S rRNA/L5/L18/L25 subcomplex. Contacts the 5S rRNA. Binds to the 5S rRNA independently of L5 and L18.

In terms of biological role, this is one of the proteins that binds to the 5S RNA in the ribosome where it forms part of the central protuberance. The sequence is that of Large ribosomal subunit protein bL25 from Pseudomonas putida (strain GB-1).